Reading from the N-terminus, the 380-residue chain is Cytochrome b (380 aa).

A run of 4 helical transmembrane segments spans residues 34 to 54, 78 to 99, 114 to 134, and 179 to 199; these read FGSL…LLAM, WLIR…YLHI, WNTG…GYVL, and FFAL…IHLT. H84 and H98 together coordinate heme b. The heme b site is built by H183 and H197. Residue H202 coordinates a ubiquinone. 4 helical membrane passes run 227 to 247, 289 to 309, 321 to 341, and 348 to 368; these read LKDI…ALFS, LGGV…PFLH, LSQL…WVGS, and FIII…ILFP.

It belongs to the cytochrome b family. The cytochrome bc1 complex contains 11 subunits: 3 respiratory subunits (MT-CYB, CYC1 and UQCRFS1), 2 core proteins (UQCRC1 and UQCRC2) and 6 low-molecular weight proteins (UQCRH/QCR6, UQCRB/QCR7, UQCRQ/QCR8, UQCR10/QCR9, UQCR11/QCR10 and a cleavage product of UQCRFS1). This cytochrome bc1 complex then forms a dimer. Requires heme b as cofactor.

Its subcellular location is the mitochondrion inner membrane. Component of the ubiquinol-cytochrome c reductase complex (complex III or cytochrome b-c1 complex) that is part of the mitochondrial respiratory chain. The b-c1 complex mediates electron transfer from ubiquinol to cytochrome c. Contributes to the generation of a proton gradient across the mitochondrial membrane that is then used for ATP synthesis. This is Cytochrome b (MT-CYB) from Daption capense (Cape petrel).